Reading from the N-terminus, the 524-residue chain is M-phase inducer phosphatase 1 (524 aa).

Residues M74 to F84 carry the Phosphodegron motif. A Phosphoserine; by CHEK1 modification is found at S76. Phosphoserine; by NEK11 occurs at positions 79, 82, and 88. S107 carries the post-translational modification Phosphoserine. S124 carries the post-translational modification Phosphoserine; by CHEK1 and CHEK2. The KEN box motif lies at K141–N143. S178 is modified (phosphoserine; by CHEK1). A disordered region spans residues L264–S317. A phosphoserine; by CHEK1 and CHEK2 mark is found at S279 and S293. Basic and acidic residues predominate over residues T303 to L312. S321 carries the post-translational modification Phosphoserine. The region spanning L376 to E482 is the Rhodanese domain. C431 is an active-site residue. T507 is modified (phosphothreonine; by CHEK1). 2 positions are modified to phosphoserine; by PLK3: S513 and S519.

It belongs to the MPI phosphatase family. As to quaternary structure, interacts with CCNB1/cyclin B1. Interacts with YWHAE/14-3-3 epsilon when phosphorylated. Interacts with CUL1 specifically when CUL1 is neddylated and active. Interacts with BTRC/BTRCP1 and FBXW11/BTRCP2. Interactions with CUL1, BTRC and FBXW11 are enhanced upon DNA damage. Interacts with CHEK2; mediates CDC25A phosphorylation and degradation in response to infrared-induced DNA damages. Interacts with HSP90AB1; prevents heat shock-mediated CDC25A degradation and contributes to cell cycle progression. Phosphorylated by CHEK1 on Ser-76, Ser-124, Ser-178, Ser-279, Ser-293 and Thr-507 during checkpoint mediated cell cycle arrest. Also phosphorylated by CHEK2 on Ser-124, Ser-279, and Ser-293 during checkpoint mediated cell cycle arrest. Phosphorylation on Ser-178 and Thr-507 creates binding sites for YWHAE/14-3-3 epsilon which inhibits CDC25A. Phosphorylation on Ser-76, Ser-124, Ser-178, Ser-279 and Ser-293 may also promote ubiquitin-dependent proteolysis of CDC25A by the SCF complex. Phosphorylation of CDC25A at Ser-76 by CHEK1 primes it for subsequent phosphorylation at Ser-79, Ser-82 and Ser-88 by NEK11. Phosphorylation by NEK11 is required for BTRC-mediated polyubiquitination and degradation. Phosphorylation by PIM1 leads to an increase in phosphatase activity. Phosphorylated by PLK3 following DNA damage, leading to promote its ubiquitination and degradation. Post-translationally, ubiquitinated by the anaphase promoting complex/cyclosome (APC/C) ubiquitin ligase complex that contains FZR1/CDH1 during G1 phase leading to its degradation by the proteasome. Ubiquitinated by a SCF complex containing BTRC and FBXW11 during S phase leading to its degradation by the proteasome. Deubiquitination by USP17L2/DUB3 leads to its stabilization.

It catalyses the reaction O-phospho-L-tyrosyl-[protein] + H2O = L-tyrosyl-[protein] + phosphate. With respect to regulation, stimulated by B-type cyclins. Stimulated by PIM1-mediated phosphorylation. Tyrosine protein phosphatase which functions as a dosage-dependent inducer of mitotic progression. Directly dephosphorylates CDK1 and stimulates its kinase activity. Also dephosphorylates CDK2 in complex with cyclin-E, in vitro. This chain is M-phase inducer phosphatase 1 (CDC25A), found in Homo sapiens (Human).